Consider the following 251-residue polypeptide: Segregation and condensation protein A (251 aa).

It belongs to the ScpA family. In terms of assembly, component of a cohesin-like complex composed of ScpA, ScpB and the Smc homodimer, in which ScpA and ScpB bind to the head domain of Smc. The presence of the three proteins is required for the association of the complex with DNA.

The protein resides in the cytoplasm. Participates in chromosomal partition during cell division. May act via the formation of a condensin-like complex containing Smc and ScpB that pull DNA away from mid-cell into both cell halves. The chain is Segregation and condensation protein A from Bacillus velezensis (strain DSM 23117 / BGSC 10A6 / LMG 26770 / FZB42) (Bacillus amyloliquefaciens subsp. plantarum).